Consider the following 179-residue polypeptide: Large ribosomal subunit protein uL5 (179 aa).

This sequence belongs to the universal ribosomal protein uL5 family. Part of the 50S ribosomal subunit; part of the 5S rRNA/L5/L18/L25 subcomplex. Contacts the 5S rRNA and the P site tRNA. Forms a bridge to the 30S subunit in the 70S ribosome.

Its function is as follows. This is one of the proteins that bind and probably mediate the attachment of the 5S RNA into the large ribosomal subunit, where it forms part of the central protuberance. In the 70S ribosome it contacts protein S13 of the 30S subunit (bridge B1b), connecting the 2 subunits; this bridge is implicated in subunit movement. Contacts the P site tRNA; the 5S rRNA and some of its associated proteins might help stabilize positioning of ribosome-bound tRNAs. This chain is Large ribosomal subunit protein uL5, found in Bacillus velezensis (strain DSM 23117 / BGSC 10A6 / LMG 26770 / FZB42) (Bacillus amyloliquefaciens subsp. plantarum).